Here is an 870-residue protein sequence, read N- to C-terminus: DNA topoisomerase 1 (870 aa).

The 128-residue stretch at 1 to 128 folds into the Toprim domain; that stretch reads MKSPRFRHSQ…RVYKSSFEAA (128 aa). The 436-residue stretch at 143–578 folds into the Topo IA-type catalytic domain; that stretch reads YDGLAYSAKA…QTNAFVQKIT (436 aa). Residues 180 to 185 are interaction with DNA; it reads SSGRVQ. Tyr-299 functions as the O-(5'-phospho-DNA)-tyrosine intermediate in the catalytic mechanism. 3 C4-type zinc fingers span residues 603 to 627, 693 to 717, and 784 to 807; these read CQCP…HPNC, CPKC…QNGC, and CPLC…KRGC.

The protein belongs to the type IA topoisomerase family. Monomer.

It carries out the reaction ATP-independent breakage of single-stranded DNA, followed by passage and rejoining.. Functionally, releases the supercoiling and torsional tension of DNA, which is introduced during the DNA replication and transcription, by transiently cleaving and rejoining one strand of the DNA duplex. Introduces a single-strand break via transesterification at a target site in duplex DNA. The scissile phosphodiester is attacked by the catalytic tyrosine of the enzyme, resulting in the formation of a DNA-(5'-phosphotyrosyl)-enzyme intermediate and the expulsion of a 3'-OH DNA strand. The free DNA strand then undergoes passage around the unbroken strand, thus removing DNA supercoils. Finally, in the religation step, the DNA 3'-OH attacks the covalent intermediate to expel the active-site tyrosine and restore the DNA phosphodiester backbone. The polypeptide is DNA topoisomerase 1 (topX) (Bacillus anthracis).